The sequence spans 471 residues: E3 SUMO-protein ligase EGR2 (471 aa).

The segment covering Pro-127 to Pro-143 has biased composition (low complexity). The interval Pro-127–Ala-177 is disordered. Lys-246 carries the post-translational modification N6-acetyllysine; by EP300. 2 disordered regions span residues Gly-273 to Ala-301 and Arg-313 to Pro-336. A compositionally biased stretch (gly residues) spans Thr-280–Glu-289. C2H2-type zinc fingers lie at residues Tyr-335–His-359, Phe-365–His-387, and Phe-393–His-415. The disordered stretch occupies residues Asp-406–Pro-471. Basic residues predominate over residues Arg-410 to Glu-420. Low complexity predominate over residues Ser-424–Ser-437.

It belongs to the EGR C2H2-type zinc-finger protein family. Interacts with HCFC1. Interacts with WWP2. Interacts with UBC9. Interacts with CITED1. Interacts (via phosphorylated form) with SFN. Post-translationally, ubiquitinated by WWP2 leading to proteasomal degradation. In terms of processing, acetylated at Lys-246. May be deacetylated by HDAC6, HDAC10 or SIRT1.

It is found in the nucleus. Its pathway is protein modification; protein sumoylation. Sequence-specific DNA-binding transcription factor. Plays a role in hindbrain segmentation by regulating the expression of a subset of homeobox containing genes and in Schwann cell myelination by regulating the expression of genes involved in the formation and maintenance of myelin. Binds to two EGR2-consensus sites EGR2A (5'-CTGTAGGAG-3') and EGR2B (5'-ATGTAGGTG-3') in the HOXB3 enhancer and promotes HOXB3 transcriptional activation. Binds to specific DNA sites located in the promoter region of HOXA4, HOXB2 and ERBB2. Regulates hindbrain segmentation by controlling the expression of Hox genes, such as HOXA4, HOXB3 and HOXB2, and thereby specifying odd and even rhombomeres. Promotes the expression of HOXB3 in the rhombomere r5 in the hindbrain. Regulates myelination in the peripheral nervous system after birth, possibly by regulating the expression of myelin proteins, such as MPZ, and by promoting the differentiation of Schwann cells. Involved in the development of the jaw openener musculature, probably by playing a role in its innervation through trigeminal motor neurons. May play a role in adipogenesis, possibly by regulating the expression of CEBPB. Functionally, E3 SUMO-protein ligase helping SUMO1 conjugation to its coregulators NAB1 and NAB2, whose sumoylation down-regulates EGR2 transcriptional activity. This Sus scrofa (Pig) protein is E3 SUMO-protein ligase EGR2 (EGR2).